The primary structure comprises 212 residues: Adenylate kinase (212 aa).

Residue 10–15 (GAGKGT) participates in ATP binding. Residues 30-59 (STGDMFRAAMANQTEMGRLAKSYIDKGELV) are NMP. AMP contacts are provided by residues T31, R36, 57-59 (ELV), 86-89 (GYPR), and Q93. The LID stretch occupies residues 127–159 (GRIINRKTGETFHKVFNPPVDYKEEDYYQREDD). Residues R128 and 137-138 (TF) each bind ATP. The AMP site is built by R156 and R167. Q195 provides a ligand contact to ATP.

The protein belongs to the adenylate kinase family. In terms of assembly, monomer.

The protein localises to the cytoplasm. It carries out the reaction AMP + ATP = 2 ADP. It participates in purine metabolism; AMP biosynthesis via salvage pathway; AMP from ADP: step 1/1. Functionally, catalyzes the reversible transfer of the terminal phosphate group between ATP and AMP. Plays an important role in cellular energy homeostasis and in adenine nucleotide metabolism. The polypeptide is Adenylate kinase (Streptococcus pyogenes serotype M5 (strain Manfredo)).